The primary structure comprises 125 residues: Small ribosomal subunit protein uS13 (125 aa).

The segment at 90 to 125 (QRHRKGLPVRGQRTKTNARTRKGPKRTVAGKKKATK) is disordered.

It belongs to the universal ribosomal protein uS13 family. Part of the 30S ribosomal subunit. Forms a loose heterodimer with protein S19. Forms two bridges to the 50S subunit in the 70S ribosome.

In terms of biological role, located at the top of the head of the 30S subunit, it contacts several helices of the 16S rRNA. In the 70S ribosome it contacts the 23S rRNA (bridge B1a) and protein L5 of the 50S subunit (bridge B1b), connecting the 2 subunits; these bridges are implicated in subunit movement. Contacts the tRNAs in the A and P-sites. The sequence is that of Small ribosomal subunit protein uS13 from Bifidobacterium adolescentis (strain ATCC 15703 / DSM 20083 / NCTC 11814 / E194a).